We begin with the raw amino-acid sequence, 134 residues long: Large ribosomal subunit protein bL17 (134 aa).

This sequence belongs to the bacterial ribosomal protein bL17 family. In terms of assembly, part of the 50S ribosomal subunit. Contacts protein L32.

This chain is Large ribosomal subunit protein bL17, found in Paracidovorax citrulli (strain AAC00-1) (Acidovorax citrulli).